Reading from the N-terminus, the 630-residue chain is MLSSRLGLFNMFRLLAAILVFTGLASAVNADLLQTGGSRWVVLASTRDLDNAIGIANLYQHRFDDVRVAEASNGWLAVIAGPVSIARGAKAAREELWSAGGFPPDLFLSNGQSLRRTVWEPPKGRPIPTWSYKGGQPLVFSAGGLEIEVSHLAEGNTRYPSITLRRAGRLLIKEVLKGSESFGDNMNAEVRLVWLDRAVAEPQIIFSSHWNGAHCCTVSKILTKVGNGWTSIEGATLDGGGYRLQDIDGDGSVELLSVDNSFLYTFAPYVFSSAPLVISKLDGDRLIDMRWNSAFRRYYRRELFGWEYRAKLEPEIWRKNGFLSAWLALKSVLGESDQAWTVVLENYDRSSEWPLTVCDAPLKEGVCPEEATREVSFPEALRDHLARNGYLGPQVAKIEETSKPTEQPSPADSTSTPAAPEKGAASSAGTGFFISKQGHLVTNHHVIKGCSAIEVRRPGQLRLPANIVAVDPTNDLALLRVESDTGAYASVRVETRLGESVAVFGYPLSHVLASGGNFTLGNVTALAGLGNDTRFIQISAPVQPGNSGGPLIDSYGNVIGVVTSKLDALAALAVTGDIPQNVNFALRGASLYAFLLSYGISPVAGSNTQKLDAPELAERASSFSVAVTCE.

Transmembrane regions (helical) follow at residues 8 to 28 (LFNM…ASAV) and 258 to 278 (VDNS…PLVI). The tract at residues 399–426 (EETSKPTEQPSPADSTSTPAAPEKGAAS) is disordered. The segment covering 404 to 417 (PTEQPSPADSTSTP) has biased composition (polar residues).

Belongs to the peptidase S1C family.

It localises to the cell membrane. This is an uncharacterized protein from Sinorhizobium fredii (strain NBRC 101917 / NGR234).